The chain runs to 337 residues: Leucine-rich repeat-containing protein 39 (337 aa).

9 LRR repeats span residues 84–105 (QLQE…IGRF), 107–128 (HLIV…IGLL), 130–152 (RLQE…SNCT), 153–176 (SLEK…SKLL), 177–198 (KLTH…VLDM), 200–221 (ALEW…LDRM), 223–244 (SLHT…IKNM), 246–267 (NLGT…MEEM), and 269–290 (NLRF…PPSD).

Interacts with MYH7 (via C-terminus). Expressed in heart and skeletal muscle.

It localises to the cytoplasm. The protein resides in the myofibril. It is found in the sarcomere. The protein localises to the m line. Its function is as follows. Component of the sarcomeric M-band which plays a role in myocyte response to biomechanical stress. May regulate expression of other M-band proteins via an SRF-dependent pathway. Important for normal contractile function in heart. The sequence is that of Leucine-rich repeat-containing protein 39 from Mus musculus (Mouse).